We begin with the raw amino-acid sequence, 273 residues long: Glutamate 5-kinase (273 aa).

Lys15 provides a ligand contact to ATP. 3 residues coordinate substrate: Ser55, Asp142, and Asn158. Residues 178-179 (SD) and 220-226 (TGGMLSK) each bind ATP.

It belongs to the glutamate 5-kinase family.

The protein localises to the cytoplasm. It catalyses the reaction L-glutamate + ATP = L-glutamyl 5-phosphate + ADP. It functions in the pathway amino-acid biosynthesis; L-proline biosynthesis; L-glutamate 5-semialdehyde from L-glutamate: step 1/2. Catalyzes the transfer of a phosphate group to glutamate to form L-glutamate 5-phosphate. The sequence is that of Glutamate 5-kinase from Streptococcus pyogenes serotype M3 (strain ATCC BAA-595 / MGAS315).